The sequence spans 396 residues: Anhydro-N-acetylmuramic acid kinase (396 aa).

19–26 (GTSADGID) contacts ATP.

Belongs to the anhydro-N-acetylmuramic acid kinase family.

The enzyme catalyses 1,6-anhydro-N-acetyl-beta-muramate + ATP + H2O = N-acetyl-D-muramate 6-phosphate + ADP + H(+). The protein operates within amino-sugar metabolism; 1,6-anhydro-N-acetylmuramate degradation. Its pathway is cell wall biogenesis; peptidoglycan recycling. Its function is as follows. Catalyzes the specific phosphorylation of 1,6-anhydro-N-acetylmuramic acid (anhMurNAc) with the simultaneous cleavage of the 1,6-anhydro ring, generating MurNAc-6-P. Is required for the utilization of anhMurNAc either imported from the medium or derived from its own cell wall murein, and thus plays a role in cell wall recycling. This Colwellia psychrerythraea (strain 34H / ATCC BAA-681) (Vibrio psychroerythus) protein is Anhydro-N-acetylmuramic acid kinase.